The chain runs to 487 residues: Proline--tRNA ligase (487 aa).

Belongs to the class-II aminoacyl-tRNA synthetase family. ProS type 3 subfamily. Homodimer.

The protein localises to the cytoplasm. It catalyses the reaction tRNA(Pro) + L-proline + ATP = L-prolyl-tRNA(Pro) + AMP + diphosphate. Catalyzes the attachment of proline to tRNA(Pro) in a two-step reaction: proline is first activated by ATP to form Pro-AMP and then transferred to the acceptor end of tRNA(Pro). This chain is Proline--tRNA ligase, found in Pyrobaculum calidifontis (strain DSM 21063 / JCM 11548 / VA1).